A 29-amino-acid polypeptide reads, in one-letter code: Toxin II.9 (29 aa).

The 28-residue stretch at 2–29 (KDGYLVNKYTGCKVNCYKLGENKFCNRE) folds into the LCN-type CS-alpha/beta domain.

It belongs to the long (4 C-C) scorpion toxin superfamily. Sodium channel inhibitor family. Beta subfamily. In terms of tissue distribution, expressed by the venom gland.

The protein localises to the secreted. Binds to sodium channels (Nav) and shift the voltage of activation toward more negative potentials. This toxin is active on crustaceans. This chain is Toxin II.9, found in Centruroides limpidus (Mexican scorpion).